Consider the following 643-residue polypeptide: 1-deoxy-D-xylulose-5-phosphate synthase (643 aa).

Thiamine diphosphate-binding positions include H78 and A119–S121. D150 is a Mg(2+) binding site. Residues G151–S152, N179, Y288, and E370 each bind thiamine diphosphate. N179 contributes to the Mg(2+) binding site.

The protein belongs to the transketolase family. DXPS subfamily. Homodimer. It depends on Mg(2+) as a cofactor. Thiamine diphosphate serves as cofactor.

The enzyme catalyses D-glyceraldehyde 3-phosphate + pyruvate + H(+) = 1-deoxy-D-xylulose 5-phosphate + CO2. It functions in the pathway metabolic intermediate biosynthesis; 1-deoxy-D-xylulose 5-phosphate biosynthesis; 1-deoxy-D-xylulose 5-phosphate from D-glyceraldehyde 3-phosphate and pyruvate: step 1/1. Functionally, catalyzes the acyloin condensation reaction between C atoms 2 and 3 of pyruvate and glyceraldehyde 3-phosphate to yield 1-deoxy-D-xylulose-5-phosphate (DXP). The protein is 1-deoxy-D-xylulose-5-phosphate synthase of Brucella abortus (strain 2308).